Consider the following 488-residue polypeptide: PTS system mannitol-specific EIICB component (488 aa).

At 1-26 (MRKKLAKVKVHIQSLDSLLSSMTMPI) the chain is on the cytoplasmic side. A PTS EIIC type-2 domain is found at 15-362 (LDSLLSSMTM…LSLTRKKQLK (348 aa)). The helical transmembrane segment at 27–48 (IGIFIAWGLLASFFIPSGWTPD) threads the bilayer. The Extracellular portion of the chain corresponds to 49–52 (KNLA). Residues 53–73 (LMVGIGIQYVIPTIIXFFGGK) form a helical membrane-spanning segment. Residues 74–147 (KIYEIRGGVI…SGFEMLVNNF (74 aa)) are Cytoplasmic-facing. Residues 148 to 169 (YLGFLGFALIFPSFYLSIYLIG) traverse the membrane as a helical segment. Over 170-178 (YIQLGLKLL) the chain is Extracellular. The chain crosses the membrane as a helical span at residues 179 to 199 (VEIMQQYKLYPIAAIVIEPAK). The Cytoplasmic segment spans residues 200 to 289 (VLFLNNAINH…VLLKPVLILA (90 aa)). A helical membrane pass occupies residues 290–309 (TIAVGVVGNGILQIFNAGTI). At 310-331 (APVSPGSVIAGFLQINKTPLDV) the chain is on the extracellular side. Residues 332–353 (AGYALALVLSAVTSLLISLLLL) traverse the membrane as a helical segment. The Cytoplasmic segment spans residues 354 to 488 (SLTRKKQLKT…IIEKIKNEKN (135 aa)). In terms of domain architecture, PTS EIIB type-2 spans 397-488 (SQVTFVCDAG…IIEKIKNEKN (92 aa)). The active-site Phosphocysteine intermediate; for EIIB activity is Cys403. Residue Cys403 is modified to Phosphocysteine; by EIIA.

Homodimer.

Its subcellular location is the cell membrane. It carries out the reaction D-mannitol(out) + N(pros)-phospho-L-histidyl-[protein] = D-mannitol 1-phosphate(in) + L-histidyl-[protein]. Functionally, the phosphoenolpyruvate-dependent sugar phosphotransferase system (sugar PTS), a major carbohydrate active transport system, catalyzes the phosphorylation of incoming sugar substrates concomitantly with their translocation across the cell membrane. The enzyme II CmtAB PTS system is involved in D-mannitol transport. The chain is PTS system mannitol-specific EIICB component (mtlA) from Mycoplasma pneumoniae (strain ATCC 29342 / M129 / Subtype 1) (Mycoplasmoides pneumoniae).